The primary structure comprises 419 residues: Odorant receptor 56a (419 aa).

Topologically, residues 1-41 (MFKVKDLLLSPTTFEDPIFGTHLRYFQWYGYVASKDQNRPL) are cytoplasmic. The helical transmembrane segment at 42 to 62 (LSLIRCTILTASIWLSCALML) threads the bilayer. At 63 to 76 (ARVFRGYENLNDGA) the chain is on the extracellular side. A helical membrane pass occupies residues 77–97 (TSYATAVQYFAVSIAMFNAYV). The Cytoplasmic portion of the chain corresponds to 98–137 (QRDKVISLLRVAHSDIQNLMHEADNREMELLVATQAYTRT). Residues 138–158 (ITLLIWIPSVIAGLMAYSDCI) traverse the membrane as a helical segment. The Extracellular segment spans residues 159 to 196 (YRSLFLPKSVFNVPAVRRGEEHPILLFQLFPFGELCDN). The chain crosses the membrane as a helical span at residues 197–217 (FVVGYLGPWYALGLGITAIPL). The Cytoplasmic segment spans residues 218 to 292 (WHTFITCLMK…FVQELQYLIC (75 aa)). Residues 293–313 (VPVMADFIIFSVLICFLFFAL) traverse the membrane as a helical segment. Residues 314–323 (TVGVPSKMDY) lie on the Extracellular side of the membrane. Residues 324–344 (FFMFIYLFVMAGILWIYHWHA) form a helical membrane-spanning segment. At 345–389 (TLIVECHDELSLAYFSCGWYNFEMPLQKMLVFMMMHAQRPMKMRA) the chain is on the cytoplasmic side. Residues 390–410 (LLVDLNLRTFIDIGRGAYSYF) form a helical membrane-spanning segment. Residues 411 to 419 (NLLRSSHLY) are Extracellular-facing.

The protein belongs to the insect chemoreceptor superfamily. Heteromeric odorant receptor channel (TC 1.A.69) family. Or30a subfamily. In terms of assembly, interacts with Orco. Complexes exist early in the endomembrane system in olfactory sensory neurons (OSNs), coupling these complexes to the conserved ciliary trafficking pathway. Expressed in olfactory sensory neurons in the antenna.

The protein resides in the cell membrane. In terms of biological role, odorant receptor which mediates acceptance or avoidance behavior, depending on its substrates. The odorant receptor repertoire encodes a large collection of odor stimuli that vary widely in identity, intensity, and duration. May form a complex with Orco to form odorant-sensing units, providing sensitive and prolonged odorant signaling and calcium permeability. Specific receptor for geosmin, a microbial odorant that constitutes an ecologically relevant stimulus that alerts flies to the presence of harmful microbes and induces avoidance behavior. This chain is Odorant receptor 56a (Or56a), found in Drosophila melanogaster (Fruit fly).